The primary structure comprises 78 residues: Small ribosomal subunit protein bS16c (78 aa).

Belongs to the bacterial ribosomal protein bS16 family.

It localises to the plastid. It is found in the chloroplast. The protein is Small ribosomal subunit protein bS16c of Adiantum capillus-veneris (Maidenhair fern).